The primary structure comprises 208 residues: Thioesterase 1/protease 1/lysophospholipase L1 (208 aa).

A signal peptide spans 1–26; sequence MMNFNNVFRWHLPFLFLVLLTFRAAA. Ser-36 serves as the catalytic Nucleophile. Residues Gly-70 and Asn-99 each coordinate substrate. Residues Asp-180 and His-183 contribute to the active site.

Belongs to the 'GDSL' lipolytic enzyme family. Monomer or homotetramer.

It is found in the periplasm. It carries out the reaction a fatty acyl-CoA + H2O = a fatty acid + CoA + H(+). The enzyme catalyses hexadecanoyl-CoA + H2O = hexadecanoate + CoA + H(+). It catalyses the reaction (9Z)-hexadecenoyl-CoA + H2O = (9Z)-hexadecenoate + CoA + H(+). The catalysed reaction is octadecanoyl-CoA + H2O = octadecanoate + CoA + H(+). It carries out the reaction (9Z)-octadecenoyl-CoA + H2O = (9Z)-octadecenoate + CoA + H(+). The enzyme catalyses (9Z)-octadecenoyl-[ACP] + H2O = (9Z)-octadecenoate + holo-[ACP] + H(+). It catalyses the reaction (11Z)-octadecenoyl-CoA + H2O = (11Z)-octadecenoate + CoA + H(+). The catalysed reaction is tetradecanoyl-CoA + H2O = tetradecanoate + CoA + H(+). It carries out the reaction (5Z,8Z,11Z,14Z)-eicosatetraenoyl-CoA + H2O = (5Z,8Z,11Z,14Z)-eicosatetraenoate + CoA + H(+). The enzyme catalyses dodecanoyl-CoA + H2O = dodecanoate + CoA + H(+). It catalyses the reaction decanoyl-CoA + H2O = decanoate + CoA + H(+). The catalysed reaction is hexanoyl-CoA + H2O = hexanoate + CoA + H(+). It carries out the reaction a 1-acyl-sn-glycero-3-phosphocholine + H2O = sn-glycerol 3-phosphocholine + a fatty acid + H(+). The enzyme catalyses a phenyl acetate + H2O = a phenol + acetate + H(+). It catalyses the reaction a butanoate ester + H2O = an aliphatic alcohol + butanoate + H(+). The catalysed reaction is a hexanoate ester + H2O = an aliphatic alcohol + hexanoate + H(+). It carries out the reaction an octanoate ester + H2O = an aliphatic alcohol + octanoate + H(+). In terms of biological role, tesA is a multifunctional esterase that can act as a thioesterase, arylesterase, lysophospholipase and protease. This is Thioesterase 1/protease 1/lysophospholipase L1 (tesA) from Escherichia coli O6:H1 (strain CFT073 / ATCC 700928 / UPEC).